Consider the following 226-residue polypeptide: Fibrillarin-like rRNA/tRNA 2'-O-methyltransferase (226 aa).

Residues 82–83 (TT), 100–101 (EF), 125–126 (DA), and 145–148 (DVAQ) contribute to the S-adenosyl-L-methionine site.

It belongs to the methyltransferase superfamily. Fibrillarin family. In terms of assembly, interacts with nop5. Component of box C/D small ribonucleoprotein (sRNP) particles that contain rpl7ae, FlpA and nop5, plus a guide RNA.

In terms of biological role, involved in pre-rRNA and tRNA processing. Utilizes the methyl donor S-adenosyl-L-methionine to catalyze the site-specific 2'-hydroxyl methylation of ribose moieties in rRNA and tRNA. Site specificity is provided by a guide RNA that base pairs with the substrate. Methylation occurs at a characteristic distance from the sequence involved in base pairing with the guide RNA. This chain is Fibrillarin-like rRNA/tRNA 2'-O-methyltransferase, found in Methanosarcina barkeri (strain Fusaro / DSM 804).